Reading from the N-terminus, the 332-residue chain is L-lactate dehydrogenase C chain (332 aa).

Blocked amino end (Ser) is present on serine 2. NAD(+) contacts are provided by residues glycine 29–lysine 57 and arginine 99. Substrate is bound by residues arginine 106, asparagine 138, and arginine 169. Asparagine 138 lines the NAD(+) pocket. The Proton acceptor role is filled by histidine 193. Threonine 248 provides a ligand contact to substrate.

The protein belongs to the LDH/MDH superfamily. LDH family. As to quaternary structure, homotetramer. Interacts with RABL2/RABL2A; binds preferentially to GTP-bound RABL2.

It is found in the cytoplasm. It catalyses the reaction (S)-lactate + NAD(+) = pyruvate + NADH + H(+). It participates in fermentation; pyruvate fermentation to lactate; (S)-lactate from pyruvate: step 1/1. Its function is as follows. Possible role in sperm motility. This Rattus norvegicus (Rat) protein is L-lactate dehydrogenase C chain (Ldhc).